The chain runs to 221 residues: uncharacterized protein (221 aa).

A compositionally biased stretch (basic and acidic residues) spans 1–16 (MESSRWDKDPPGERRP). The tract at residues 1 to 64 (MESSRWDKDP…SHTPQTNTRR (64 aa)) is disordered.

This is an uncharacterized protein from Homo sapiens (Human).